A 120-amino-acid polypeptide reads, in one-letter code: UPF0231 protein YacL (120 aa).

It belongs to the UPF0231 family.

This chain is UPF0231 protein YacL, found in Escherichia coli O139:H28 (strain E24377A / ETEC).